Consider the following 189-residue polypeptide: dCTP deaminase (189 aa).

Residues 112–117 (KSTYAR), 136–138 (TLE), Gln157, Tyr171, and Gln181 contribute to the dCTP site. The active-site Proton donor/acceptor is the Glu138.

It belongs to the dCTP deaminase family. As to quaternary structure, homotrimer.

It catalyses the reaction dCTP + H2O + H(+) = dUTP + NH4(+). The protein operates within pyrimidine metabolism; dUMP biosynthesis; dUMP from dCTP (dUTP route): step 1/2. Catalyzes the deamination of dCTP to dUTP. This Xanthomonas oryzae pv. oryzae (strain MAFF 311018) protein is dCTP deaminase.